Reading from the N-terminus, the 392-residue chain is Imidazolonepropionase (392 aa).

Fe(3+) is bound by residues histidine 69 and histidine 71. Residues histidine 69 and histidine 71 each coordinate Zn(2+). 4-imidazolone-5-propanoate-binding residues include arginine 78, tyrosine 136, and histidine 163. N-formimidoyl-L-glutamate is bound at residue tyrosine 136. Histidine 226 contacts Fe(3+). A Zn(2+)-binding site is contributed by histidine 226. Glutamine 229 is a 4-imidazolone-5-propanoate binding site. Aspartate 302 contributes to the Fe(3+) binding site. Zn(2+) is bound at residue aspartate 302. The N-formimidoyl-L-glutamate site is built by asparagine 304 and glycine 306. Position 307 (serine 307) interacts with 4-imidazolone-5-propanoate.

Belongs to the metallo-dependent hydrolases superfamily. HutI family. The cofactor is Zn(2+). Requires Fe(3+) as cofactor.

It is found in the cytoplasm. The catalysed reaction is 4-imidazolone-5-propanoate + H2O = N-formimidoyl-L-glutamate. It functions in the pathway amino-acid degradation; L-histidine degradation into L-glutamate; N-formimidoyl-L-glutamate from L-histidine: step 3/3. In terms of biological role, catalyzes the hydrolytic cleavage of the carbon-nitrogen bond in imidazolone-5-propanoate to yield N-formimidoyl-L-glutamate. It is the third step in the universal histidine degradation pathway. In Salinispora tropica (strain ATCC BAA-916 / DSM 44818 / JCM 13857 / NBRC 105044 / CNB-440), this protein is Imidazolonepropionase.